The chain runs to 349 residues: 2-oxoglutarate-Fe(II) type oxidoreductase hxnY (349 aa).

In terms of domain architecture, Fe2OG dioxygenase spans G178–G282. Fe cation is bound by residues H205, D207, and H263. R273 serves as a coordination point for 2-oxoglutarate.

It belongs to the iron/ascorbate-dependent oxidoreductase family. Requires Fe(2+) as cofactor.

Functionally, 2-oxoglutarate-Fe(II) type oxidoreductase, part of the hnx cluster involved in the purine degradation. The nicotinate hydroxylase hnxS accepts nicotinate as a substrate and catalyzes the first step of nicotinate catabolism. The major facilitator-type transporters hxnP and hxnZ are probably involved in the uptake of nicotinate-derived metabolites, and the oxidoreductases hxnT and hxnY in the further metabolism of 6-OH nicotinic acid. The sequence is that of 2-oxoglutarate-Fe(II) type oxidoreductase hxnY from Emericella nidulans (strain FGSC A4 / ATCC 38163 / CBS 112.46 / NRRL 194 / M139) (Aspergillus nidulans).